We begin with the raw amino-acid sequence, 163 residues long: MERADNSNLEMLLETDWQLHQVYTGENIFFVIAKLGWLKTLHTLNVLIDEEIKPWLQQRNKLGDTCIHVAALANRGKQAIQLIEKLVEYGANLNTRRNCNGDTVLDIAVKNKDHELTVWLWKQPSINLQTEKFFHYVMDQMKLKESQENKMEILEAYMMQLFK.

ANK repeat units lie at residues 62–95 (LGDT…NLNT) and 100–130 (NGDT…NLQT).

It belongs to the polydnaviridae I-Kappa-B like protein family.

Its function is as follows. Suppresses the host immune response through NF-kappa-B inactivation. Possesses ankyrin repeat domains required for NF-kappa-B binding but lacks the regulatory regions required for dissociation from NF-kappa-B and degradation. Therefore, prevents host NF-kappa-B release and subsequent activation. In Microplitis demolitor (Parasitoid wasp), this protein is I-Kappa-B like protein N3 (N6).